An 840-amino-acid polypeptide reads, in one-letter code: Sorting nexin-25 (840 aa).

Positions 1–164 (MDRVLRDVFD…MLLRQLEYRE (164 aa)) constitute a PXA domain. The RGS domain occupies 287–401 (QFEDIMTNPF…LVSDLYEKLM (115 aa)). Residues 404 to 437 (EEEEEPDAQLASEKDELGSGGEAGEEAVEGTSGV) are disordered. Residues 446 to 494 (IKLRELNEKLEYKRQALSSIQNAPKPDKKIISKLKDEILLIEKECTALQ) adopt a coiled-coil conformation. Residues 508 to 628 (GLWRASITSA…AFLSPSPDYL (121 aa)) form the PX domain. Serine 665 carries the post-translational modification Phosphoserine.

The protein belongs to the sorting nexin family.

It is found in the endosome membrane. In terms of biological role, may be involved in several stages of intracellular trafficking. This is Sorting nexin-25 (Snx25) from Mus musculus (Mouse).